Consider the following 468-residue polypeptide: ATP synthase subunit beta (468 aa).

G148–T155 contacts ATP.

The protein belongs to the ATPase alpha/beta chains family. In terms of assembly, F-type ATPases have 2 components, CF(1) - the catalytic core - and CF(0) - the membrane proton channel. CF(1) has five subunits: alpha(3), beta(3), gamma(1), delta(1), epsilon(1). CF(0) has three main subunits: a(1), b(2) and c(9-12). The alpha and beta chains form an alternating ring which encloses part of the gamma chain. CF(1) is attached to CF(0) by a central stalk formed by the gamma and epsilon chains, while a peripheral stalk is formed by the delta and b chains.

It localises to the cell inner membrane. It carries out the reaction ATP + H2O + 4 H(+)(in) = ADP + phosphate + 5 H(+)(out). Its function is as follows. Produces ATP from ADP in the presence of a proton gradient across the membrane. The catalytic sites are hosted primarily by the beta subunits. The chain is ATP synthase subunit beta from Xanthomonas campestris pv. campestris (strain B100).